The primary structure comprises 319 residues: Olfactory receptor 8U8 (319 aa).

At 1 to 28 (MAHINCTQATEFILVGLTDHQELKMPLF) the chain is on the extracellular side. Residue Asn5 is glycosylated (N-linked (GlcNAc...) asparagine). The helical transmembrane segment at 29–49 (VLFLSIYLFTVVGNLGLILLI) threads the bilayer. The Cytoplasmic segment spans residues 50 to 56 (RADTSLN). The chain crosses the membrane as a helical span at residues 57–77 (TPMYFFLSNLAFVDFCYSSVI). Residues 78–97 (TPKMLGNFLYKQNVISFDAC) are Extracellular-facing. Cys97 and Cys179 are oxidised to a cystine. Residues 98–118 (ATQLGCFLTFMVSESLLLASM) form a helical membrane-spanning segment. Residues 119–122 (AYDR) lie on the Cytoplasmic side of the membrane. A helical membrane pass occupies residues 123 to 143 (YVAICNPLLYMVVMTPGICIQ). At 144–204 (LVAVPYSYSF…KQLWILACAG (61 aa)) the chain is on the extracellular side. A helical transmembrane segment spans residues 205–225 (ITFICSVLIVFVSYMFIIFAI). The Cytoplasmic segment spans residues 226–239 (LRMSSAEGRRKAFS). Residues 240–260 (TCSSHMLAVTIFYGTLIFMYL) form a helical membrane-spanning segment. The Extracellular segment spans residues 261–271 (QPSSSHSLDAD). The helical transmembrane segment at 272–292 (KMASVFYTVIIPMLNPLIYSL) threads the bilayer. The Cytoplasmic portion of the chain corresponds to 293 to 319 (RNKDVKDALKKVIINRNHAFIFLKLRK).

The protein belongs to the G-protein coupled receptor 1 family.

Its subcellular location is the cell membrane. Functionally, odorant receptor. The protein is Olfactory receptor 8U8 (OR8U8) of Homo sapiens (Human).